The sequence spans 176 residues: Ribosome maturation factor RimM (176 aa).

A PRC barrel domain is found at 97 to 176; that stretch reads DNDFYHRDLI…QIVVDWDPDF (80 aa).

It belongs to the RimM family. In terms of assembly, binds ribosomal protein uS19.

The protein localises to the cytoplasm. Its function is as follows. An accessory protein needed during the final step in the assembly of 30S ribosomal subunit, possibly for assembly of the head region. Essential for efficient processing of 16S rRNA. May be needed both before and after RbfA during the maturation of 16S rRNA. It has affinity for free ribosomal 30S subunits but not for 70S ribosomes. The polypeptide is Ribosome maturation factor RimM (Shewanella denitrificans (strain OS217 / ATCC BAA-1090 / DSM 15013)).